Consider the following 711-residue polypeptide: MSKAHGSRPYRRHNVVIPRQQPEKEMNFVQQQPPPSDAAARQMMYPPNCQVGVQDPVYLAKEFNLLTLNPQQLEGSRHQQMAKGPEKSLYSQYEQKVRPCIDLVDSLRALGVEQDLALPAIAVIGDQSSGKSSVLEALSGVALPRGSGIVTRCPLVLKLKRDPHKAWRGRISYRKTELQFQDPSQVEKEIRQAQNIIAGQGLGISHELISLEITSPEVPDLTLIDLPGITRVAVGNQPQDIGVQIKALIKNYIQKQETINLVVVPCNVDIATTEALSMAQEVDPNGDRTIGVLTKPDLVDRGTEKTVVNVAQNLTYHLQKGYMIVRCRGQEEITNQLSLAEATEKERMFFQTHPYFRALLEEGKATVPCLAERLTKELILHINKSLPLLEKQIRESHQRATDELHQCGDSIPSNEADKMFFLIEKIKLFNQDIDKLIEGEEIVKKNETRLYNKIREEFEHWALVLTANTQKVKNIVSEEVSVYEKQYRGKELLGFVNYKTFETIVHQYIEQLVEPALTMLRKTIEIVWQAFTDTAKKHFSVFSNLSQTIQNKIEDIKTRQAETAENLIRLQFRMEQLVYCQDQIYSVVLRKVRKEVFNPAGKAAQDLQLKFPFPKDLPSMSSNDEIGVHLNAYFLETSKRLANQIPFIIQYFVLQENGSCLQKAMMQILQEREQYSWLLQEHADTSAKRRFLKEKIYRLAQARRALYMFFS.

One can recognise a Dynamin-type G domain in the interval 115–387 (DLALPAIAVI…LILHINKSLP (273 aa)). The tract at residues 125 to 132 (GDQSSGKS) is G1 motif. Residue 125–132 (GDQSSGKS) coordinates GTP. The interval 150 to 152 (VTR) is G2 motif. Residues 225–228 (DLPG) form a G3 motif region. Residues 225–229 (DLPGI) and 294–297 (TKPD) each bind GTP. A G4 motif region spans residues 294–297 (TKPD). The segment at 326–329 (RCRG) is G5 motif. In terms of domain architecture, GED spans 623 to 711 (NDEIGVHLNA…ARRALYMFFS (89 aa)).

Belongs to the TRAFAC class dynamin-like GTPase superfamily. Dynamin/Fzo/YdjA family.

Its subcellular location is the cytoplasm. The protein resides in the nucleus. Its function is as follows. Interferon-induced dynamin-like GTPase with antiviral activity against vesicular stomatitis virus (VSV). The protein is Interferon-induced GTP-binding protein Mx2 (MX2) of Canis lupus familiaris (Dog).